Reading from the N-terminus, the 259-residue chain is UPF0246 protein PA14_18590 (259 aa).

This sequence belongs to the UPF0246 family.

In Pseudomonas aeruginosa (strain UCBPP-PA14), this protein is UPF0246 protein PA14_18590.